Reading from the N-terminus, the 886-residue chain is Valine--tRNA ligase (886 aa).

The 'HIGH' region signature appears at 43 to 53 (PYPTGRMHLGH). Positions 528–532 (KMSKS) match the 'KMSKS' region motif. Lys-531 is a binding site for ATP.

It belongs to the class-I aminoacyl-tRNA synthetase family. ValS type 2 subfamily.

It is found in the cytoplasm. The catalysed reaction is tRNA(Val) + L-valine + ATP = L-valyl-tRNA(Val) + AMP + diphosphate. In terms of biological role, catalyzes the attachment of valine to tRNA(Val). As ValRS can inadvertently accommodate and process structurally similar amino acids such as threonine, to avoid such errors, it has a 'posttransfer' editing activity that hydrolyzes mischarged Thr-tRNA(Val) in a tRNA-dependent manner. The polypeptide is Valine--tRNA ligase (Methanococcus maripaludis (strain DSM 14266 / JCM 13030 / NBRC 101832 / S2 / LL)).